Consider the following 348-residue polypeptide: ECA polysaccharide chain length modulation protein (348 aa).

Over 1–30 (MTQPMPGKPAEDAENELDIRGLFRTLWAGK) the chain is Cytoplasmic. The helical transmembrane segment at 31-51 (LWIIGMGLAFALIALAYTFFA) threads the bilayer. At 52-322 (RQEWSSTAIT…EPVKRDSPRR (271 aa)) the chain is on the periplasmic side. A helical membrane pass occupies residues 323–343 (AFLMIMWGIVGGLIGAGVALT). Residues 344 to 348 (RRCSK) lie on the Cytoplasmic side of the membrane.

Belongs to the WzzB/Cld/Rol family. As to quaternary structure, homooctamer. Probably part of a complex composed of WzxE, WzyE and WzzE.

Its subcellular location is the cell inner membrane. The protein operates within bacterial outer membrane biogenesis; enterobacterial common antigen biosynthesis. Functionally, modulates the polysaccharide chain length of enterobacterial common antigen (ECA). This is ECA polysaccharide chain length modulation protein from Escherichia coli O157:H7.